We begin with the raw amino-acid sequence, 1005 residues long: Probable beta-galactosidase A (1005 aa).

The N-terminal stretch at 1–18 is a signal peptide; sequence MKLLSVAAVALLAAQAAG. Tyr-96, Asn-140, Ala-141, and Glu-142 together coordinate substrate. Asn-156 carries N-linked (GlcNAc...) asparagine glycosylation. Asn-199 contacts substrate. Catalysis depends on Glu-200, which acts as the Proton donor. A disulfide bond links Cys-205 and Cys-206. Position 260 (Tyr-260) interacts with substrate. Cys-266 and Cys-315 are joined by a disulfide. Glu-298 (nucleophile) is an active-site residue. Tyr-364 serves as a coordination point for substrate. Residues Asn-373, Asn-402, Asn-453, Asn-478, Asn-522, Asn-622, Asn-760, Asn-777, Asn-805, and Asn-914 are each glycosylated (N-linked (GlcNAc...) asparagine).

The protein belongs to the glycosyl hydrolase 35 family.

It localises to the secreted. The catalysed reaction is Hydrolysis of terminal non-reducing beta-D-galactose residues in beta-D-galactosides.. Its function is as follows. Cleaves beta-linked terminal galactosyl residues from gangliosides, glycoproteins, and glycosaminoglycans. The protein is Probable beta-galactosidase A (lacA) of Aspergillus flavus (strain ATCC 200026 / FGSC A1120 / IAM 13836 / NRRL 3357 / JCM 12722 / SRRC 167).